We begin with the raw amino-acid sequence, 1709 residues long: Hybrid signal transduction histidine kinase L (1709 aa).

Disordered regions lie at residues 52–192, 206–276, 413–535, and 554–615; these read SNNN…SPPH, FFSG…NSSD, TSNS…NNSC, and QQQQ…IFNN. The segment covering 53 to 87 has biased composition (low complexity); sequence NNNNNNNNNNNNNNNNNNNNNNNNNNNNNNNNNNN. The segment covering 88 to 100 has biased composition (basic and acidic residues); it reads NEEKSNNETEKTL. A compositionally biased stretch (low complexity) spans 106 to 148; it reads TTTTTTTNNNNNNNNNNNNNNNNNNNNNNNNNNNNNNNNNNTN. Over residues 149–170 the composition is skewed to polar residues; it reads SSNDIYMNSPSSTLSSPGNAGN. Low complexity-rich tracts occupy residues 413–466, 486–535, and 554–576; these read TSNS…TPNS, NNSP…NNSC, and QQQQ…PTTS. The segment covering 585–610 has biased composition (polar residues); that stretch reads LTINTSFKTSPMSSPKSFNKPSQSPQ. One can recognise a PAS domain in the interval 700–771; sequence ATRKMVTCIE…ATLTDKKTWN (72 aa). One can recognise a PAC domain in the interval 770-822; the sequence is WNGFIRTRHNNNTLIYFEASISPVLDQFQQILYYNCTKRDVTQKRIDEESKTL. In terms of domain architecture, Histidine kinase spans 837–1059; sequence MMSHDIRTPM…TFTCILKFKK (223 aa). H840 is modified (phosphohistidine; by autocatalysis). Disordered stretches follow at residues 1068-1112 and 1137-1298; these read LLPA…HQQH and QHQL…PTSP. Low complexity-rich tracts occupy residues 1075–1112, 1137–1153, and 1176–1194; these read LQQQ…HQQH, QHQL…LQQQ, and NQHI…QQQQ. Positions 1204 to 1221 are enriched in basic residues; sequence HNSHGHNHHGSHHNHNHQ. Composition is skewed to polar residues over residues 1244 to 1257 and 1275 to 1298; these read NEQQ…NSFS and NISQ…PTSP. Response regulatory domains follow at residues 1312–1492 and 1570–1692; these read KMLF…MMYL and KVLV…KKYG. 4-aspartylphosphate is present on D1366. Low complexity-rich tracts occupy residues 1390–1412 and 1420–1440; these read QHLQ…SELQ and KNSS…SSGG. The segment at 1390–1440 is disordered; sequence QHLQQQQEQEQQQQQEQQQSELQKQPDVENKNSSQNNDNNNNNNKSNSSGG. 4-aspartylphosphate is present on D1622.

Activation probably requires transfer of a phosphate group between a histidine in the kinase core (transmitter) domain and an aspartate of the receiver domain.

It catalyses the reaction ATP + protein L-histidine = ADP + protein N-phospho-L-histidine.. Acts as a receptor histidine kinase for a signal transduction pathway. This protein undergoes an ATP-dependent autophosphorylation at a conserved histidine residue in the kinase core, and a phosphoryl group is then transferred to a conserved aspartate residue in the receiver domain. The chain is Hybrid signal transduction histidine kinase L (dhkL) from Dictyostelium discoideum (Social amoeba).